The chain runs to 224 residues: Mammalian ependymin-related protein 1 (224 aa).

An N-terminal signal peptide occupies residues 1–37; the sequence is MPGRAPLRTVPGALGAWLLGGLWAWTLCGLCSLGAVG. Cystine bridges form between C42–C172, C88–C222, and C113–C210. 2 N-linked (GlcNAc...) asparagine glycosylation sites follow: N130 and N182.

It belongs to the ependymin family. As to quaternary structure, homodimer. N-glycosylated; the glycan contains mannose-6-phosphate moieties. Ubiquitous. Detected in brain, heart, skeletal muscle, kidney, testis, ovary and prostate.

It is found in the lysosome lumen. The protein resides in the secreted. Binds anionic lipids and gangliosides at acidic pH. This is Mammalian ependymin-related protein 1 (EPDR1) from Homo sapiens (Human).